The chain runs to 117 residues: Ribosome-binding factor A (117 aa).

The protein belongs to the RbfA family. Monomer. Binds 30S ribosomal subunits, but not 50S ribosomal subunits or 70S ribosomes.

The protein resides in the cytoplasm. Its function is as follows. One of several proteins that assist in the late maturation steps of the functional core of the 30S ribosomal subunit. Associates with free 30S ribosomal subunits (but not with 30S subunits that are part of 70S ribosomes or polysomes). Required for efficient processing of 16S rRNA. May interact with the 5'-terminal helix region of 16S rRNA. The protein is Ribosome-binding factor A of Bacillus licheniformis (strain ATCC 14580 / DSM 13 / JCM 2505 / CCUG 7422 / NBRC 12200 / NCIMB 9375 / NCTC 10341 / NRRL NRS-1264 / Gibson 46).